We begin with the raw amino-acid sequence, 927 residues long: E3 ubiquitin-protein ligase HOS1 (927 aa).

The RING-type; degenerate zinc finger occupies 53–93; sequence CRATRDLASCGRFVNYVLNPCGHASLCTECCQRCDVCPICR. Disordered stretches follow at residues 678–699, 782–806, and 832–927; these read SGQFSEMEDASEGAKKSDLPDA, FKDLNRARGNSQLQGKRTEESSPEV, and VKSS…FAAR. Residues 797–806 show a composition bias toward basic and acidic residues; sequence KRTEESSPEV. 2 stretches are compositionally biased toward polar residues: residues 832 to 851 and 878 to 892; these read VKSSSNHLNGSSQKPESTFF and NNNNVLATESRNNSG. Residues 917-927 are compositionally biased toward basic residues; that stretch reads KGRRRRRFAAR.

Interacts with SCRM/ICE1, FLK and MSI4/FVE. Ubiquitously expressed with higher levels in leaf vasculature, roots and root tips.

Its subcellular location is the nucleus. It localises to the cytoplasm. The enzyme catalyses S-ubiquitinyl-[E2 ubiquitin-conjugating enzyme]-L-cysteine + [acceptor protein]-L-lysine = [E2 ubiquitin-conjugating enzyme]-L-cysteine + N(6)-ubiquitinyl-[acceptor protein]-L-lysine.. It functions in the pathway protein modification; protein ubiquitination. Functionally, E3 ubiquitin-protein ligase that mediates ubiquitination and subsequent proteasomal degradation of the transcription factor ICE1. Acts as a negative regulator of cold signaling pathways. Probably involved in recruiting the NUP107-160 subcomplex of the nuclear pore complex to chromatin. Controls flowering time in response to ambient temperatures (16 and 23 degrees Celsius) and intermittent cold, probably via the regulation of FT and TSF levels. This Arabidopsis thaliana (Mouse-ear cress) protein is E3 ubiquitin-protein ligase HOS1 (HOS1).